The sequence spans 550 residues: Glycosyltransferase-like protein gnt12 (550 aa).

Residues 1 to 29 (MSYLPLYNNNNNINNNNNNNNNRINNNKE) are disordered. Residues 1–36 (MSYLPLYNNNNNINNNNNNNNNRINNNKEKGVKNKP) are Cytoplasmic-facing. A compositionally biased stretch (low complexity) spans 8–25 (NNNNNINNNNNNNNNRIN). Residues 37–57 (FQIFISIVFIVFLCFFLIWSM) form a helical; Signal-anchor for type II membrane protein membrane-spanning segment. The Extracellular portion of the chain corresponds to 58–550 (EAKKDKNIKI…LFNEPLTNEC (493 aa)). The span at 81–97 (LINEPINNNKNNKNNIP) shows a compositional bias: low complexity. The tract at residues 81–100 (LINEPINNNKNNKNNIPKNH) is disordered. N-linked (GlcNAc...) asparagine glycans are attached at residues asparagine 233, asparagine 322, and asparagine 426.

The protein belongs to the glycosyltransferase 8 family. Highly divergent.

It is found in the membrane. This chain is Glycosyltransferase-like protein gnt12 (gnt12), found in Dictyostelium discoideum (Social amoeba).